The following is a 465-amino-acid chain: Sodium-coupled neutral amino acid transporter 7 (465 aa).

11 helical membrane-spanning segments follow: residues A54–F74, A82–A102, I128–I148, F177–G197, T204–P224, F244–F264, W275–V295, V318–L338, I370–I390, I394–I414, and S427–G447.

This sequence belongs to the amino acid/polyamine transporter 2 family.

Its subcellular location is the lysosome membrane. It localises to the cell projection. The protein localises to the axon. It catalyses the reaction L-asparagine(in) + Na(+)(in) = L-asparagine(out) + Na(+)(out). It carries out the reaction L-glutamine(in) + Na(+)(in) = L-glutamine(out) + Na(+)(out). Functionally, symporter that selectively cotransports sodium ions and amino acids, such as L-glutamine and L-asparagine from the lysosome into the cytoplasm and may participates in mTORC1 activation. The transport activity requires an acidic lysosomal lumen. The polypeptide is Sodium-coupled neutral amino acid transporter 7 (Danio rerio (Zebrafish)).